The following is a 408-amino-acid chain: Aspartate aminotransferase (408 aa).

Residues Gly-45, Trp-134, and Asn-184 each contribute to the L-aspartate site. The residue at position 247 (Lys-247) is an N6-(pyridoxal phosphate)lysine. Arg-382 serves as a coordination point for L-aspartate.

It belongs to the class-I pyridoxal-phosphate-dependent aminotransferase family. As to quaternary structure, homodimer. Pyridoxal 5'-phosphate serves as cofactor.

Its subcellular location is the cytoplasm. It carries out the reaction L-aspartate + 2-oxoglutarate = oxaloacetate + L-glutamate. Catalyzes the reversible conversion of aspartate and 2-oxoglutarate to glutamate and oxaloacetate. Does not have prephenate aminotransferase activity. In Streptomyces avermitilis (strain ATCC 31267 / DSM 46492 / JCM 5070 / NBRC 14893 / NCIMB 12804 / NRRL 8165 / MA-4680), this protein is Aspartate aminotransferase.